A 136-amino-acid chain; its full sequence is Putative pre-16S rRNA nuclease (136 aa).

Belongs to the YqgF nuclease family.

Its subcellular location is the cytoplasm. Its function is as follows. Could be a nuclease involved in processing of the 5'-end of pre-16S rRNA. This is Putative pre-16S rRNA nuclease from Francisella tularensis subsp. holarctica (strain FTNF002-00 / FTA).